We begin with the raw amino-acid sequence, 87 residues long: Small ribosomal subunit protein bS20 (87 aa).

The protein belongs to the bacterial ribosomal protein bS20 family.

Functionally, binds directly to 16S ribosomal RNA. This is Small ribosomal subunit protein bS20 from Rhizorhabdus wittichii (strain DSM 6014 / CCUG 31198 / JCM 15750 / NBRC 105917 / EY 4224 / RW1) (Sphingomonas wittichii).